Reading from the N-terminus, the 304-residue chain is MAGKSKNHIYAGFTSGLVSAVVLQPFDLLKTRVQQSNGKSMVQVIKSLNTPLDLWRGTLPSALRMSVGSAMYFTCLNTVREAVAGGRRLTVGDRSTSSLPKLTNTENLISGGLVRGTVGLLVMPITVIKVRYESSTYHYKSIVDAATSIYKHNGMRGFFYGWAATFARDAPYAGLYMLFYEQLKVALPSILFSDITTSSHSEKYYSSWSSAMINSVAAATSAGIATTCTNPFDTVKTRMQLAPKEYPNFLTSVKTIIQHEGIQALFRGLALRICRKACQAGISWCIYEDLVKRFERMNLPGPQL.

3 Solcar repeats span residues 3-82, 106-186, and 209-293; these read GKSK…VREA, ENLI…LKVA, and SSAM…LVKR. 6 consecutive transmembrane segments (helical) span residues 9–34, 57–83, 108–133, 161–184, 213–239, and 268–286; these read IYAG…TRVQ, GTLP…REAV, LISG…VRYE, GWAA…EQLK, INSV…KTRM, and GLAL…SWCI.

This sequence belongs to the mitochondrial carrier (TC 2.A.29) family. SLC25A38 subfamily.

The protein resides in the mitochondrion inner membrane. The catalysed reaction is glycine(in) = glycine(out). Its function is as follows. Mitochondrial glycine transporter that imports glycine into the mitochondrial matrix. Plays an important role in providing glycine for the first enzymatic step in heme biosynthesis, the condensation of glycine with succinyl-CoA to produce 5-aminolevulinate (ALA) in the mitochondrial matrix. The chain is Mitochondrial glycine transporter from Yarrowia lipolytica (strain CLIB 122 / E 150) (Yeast).